The primary structure comprises 337 residues: Histidine N-acetyltransferase (337 aa).

Residues 1-2 (MK) constitute a propeptide, removed in mature form. One can recognise an N-acetyltransferase domain in the interval 21–156 (LQFAVATEED…QGILLVRFRA (136 aa)).

The enzyme catalyses L-histidine + acetyl-CoA = N(alpha)-acetyl-L-histidine + CoA + H(+). In terms of biological role, enzyme responsible for the N-acetyl-histidine (NAH) synthesis, which is a major constituent of brain and lens of ectothermic vertebrates. The chain is Histidine N-acetyltransferase (hisat) from Scomber australasicus (Blue mackerel).